The following is a 966-amino-acid chain: LRR receptor-like serine/threonine-protein kinase ERL1 (966 aa).

A signal peptide spans 1-25 (MKEKMQRMVLSLAMVGFMVFGVASA). Over 26–582 (MNNEGKALMA…PLPKSRVFSR (557 aa)) the chain is Extracellular. An LRR 1 repeat occupies 40 to 63 (FSNLVNMLLDWDDVHNSDLCSWRG). Asn-68 and Asn-77 each carry an N-linked (GlcNAc...) asparagine glycan. LRR repeat units lie at residues 75–94 (SLNLSSLNLGGEISPAIGDL), 95–118 (RNLQSIDLQGNKLAGQIPDEIGNC), 120–142 (SLVYLDLSENLLYGDIPFSISKL), 143–166 (KQLETLNLKNNQLTGPVPATLTQI), 168–190 (NLKRLDLAGNHLTGEISRLLYWN), 192–214 (VLQYLGLRGNMLTGTLSSDMCQL), 215–238 (TGLWYFDVRGNNLTGTIPESIGNC), 239–261 (TSFQILDISYNQITGEIPYNIGF), 262–285 (LQVATLSLQGNRLTGRIPEVIGLM), 286–311 (QALAVLDLSDNELVGPIPPILGNLSF), 313–333 (GKLYLHGNMLTGPIPSELGNM), 334–357 (SRLSYLQLNDNKLVGTIPPELGKL), 359–381 (QLFELNLANNRLVGPIPSNISSC), 383–404 (ALNQFNVHGNLLSGSIPLAFRN), 405–429 (LGSLTYLNLSSNNFKGKIPVELGHI), 431–453 (NLDKLDLSGNNFSGSIPLTLGDL), 454–476 (EHLLILNLSRNHLSGQLPAEFGN), 478–500 (RSIQMIDVSFNLLSGVIPTELGQ), 501–525 (LQNLNSLILNNNKLHGKIPDQLTNC), and 527–550 (TLVNLNVSFNNLSGIVPPMKNFSR). N-linked (GlcNAc...) asparagine glycosylation is found at Asn-226 and Asn-237. Residues Asn-308 and Asn-332 are each glycosylated (N-linked (GlcNAc...) asparagine). N-linked (GlcNAc...) asparagine glycosylation is present at Asn-377. Asn-412, Asn-441, and Asn-460 each carry an N-linked (GlcNAc...) asparagine glycan. N-linked (GlcNAc...) asparagine glycans are attached at residues Asn-532, Asn-537, and Asn-547. A helical membrane pass occupies residues 583–603 (GALICIVLGVITLLCMIFLAV). Residues 604–966 (YKSMQQKKIL…FREVISKSSI (363 aa)) are Cytoplasmic-facing. Phosphothreonine occurs at positions 637 and 645. In terms of domain architecture, Protein kinase spans 648-921 (LNEKFIIGYG…RVLLSLVPSL (274 aa)). ATP-binding positions include 654–662 (IGYGASSTV) and Lys-676. Phosphotyrosine is present on residues Tyr-721 and Tyr-760. Catalysis depends on Asp-773, which acts as the Proton acceptor. Residue Tyr-815 is modified to Phosphotyrosine. At Thr-823 the chain carries Phosphothreonine.

Belongs to the protein kinase superfamily. Ser/Thr protein kinase family. In terms of assembly, homodimer and heterodimer with ERECTA and TMM. Interacts with EPF1 and EPF2. Interacts with SERK1, SERK2, SERK3/BAK1 and SERK4 in a EPF1-induced manner. Mostly expressed in developing organs, including bud clusters, flowers, siliques and young rosettes. Also detected in mature aboveground organs, such as leaves, stems and pedicels, but barely in roots.

Its subcellular location is the cell membrane. It carries out the reaction L-seryl-[protein] + ATP = O-phospho-L-seryl-[protein] + ADP + H(+). The enzyme catalyses L-threonyl-[protein] + ATP = O-phospho-L-threonyl-[protein] + ADP + H(+). Its function is as follows. Receptor kinase that regulates inflorescence architecture and organ shape as well as stomatal patterning, including density and clustering, together with ER and ERL2. Redundantly involved with ER in procambial development regulation. Forms a functional ligand-receptor pair with EPF1 (AC Q8S8I4). Forms a constitutive complex with TMM involved in the recognition of the stomatal regulatory peptides EPF1, EPF2 and EPFL9/STOMAGEN. The protein is LRR receptor-like serine/threonine-protein kinase ERL1 of Arabidopsis thaliana (Mouse-ear cress).